A 474-amino-acid chain; its full sequence is Bifunctional protein HldE (474 aa).

Residues 1–318 (MKLSMPRFDQ…RAIQREEGSE (318 aa)) are ribokinase. 194–197 (NLSE) contacts ATP. The active site involves aspartate 263. The tract at residues 343 to 474 (FTNGCFDILH…AIVEKIRKSE (132 aa)) is cytidylyltransferase.

The protein in the N-terminal section; belongs to the carbohydrate kinase PfkB family. It in the C-terminal section; belongs to the cytidylyltransferase family. As to quaternary structure, homodimer.

The catalysed reaction is D-glycero-beta-D-manno-heptose 7-phosphate + ATP = D-glycero-beta-D-manno-heptose 1,7-bisphosphate + ADP + H(+). The enzyme catalyses D-glycero-beta-D-manno-heptose 1-phosphate + ATP + H(+) = ADP-D-glycero-beta-D-manno-heptose + diphosphate. It functions in the pathway nucleotide-sugar biosynthesis; ADP-L-glycero-beta-D-manno-heptose biosynthesis; ADP-L-glycero-beta-D-manno-heptose from D-glycero-beta-D-manno-heptose 7-phosphate: step 1/4. It participates in nucleotide-sugar biosynthesis; ADP-L-glycero-beta-D-manno-heptose biosynthesis; ADP-L-glycero-beta-D-manno-heptose from D-glycero-beta-D-manno-heptose 7-phosphate: step 3/4. Functionally, catalyzes the phosphorylation of D-glycero-D-manno-heptose 7-phosphate at the C-1 position to selectively form D-glycero-beta-D-manno-heptose-1,7-bisphosphate. Catalyzes the ADP transfer from ATP to D-glycero-beta-D-manno-heptose 1-phosphate, yielding ADP-D-glycero-beta-D-manno-heptose. This Pseudomonas fluorescens (strain Pf0-1) protein is Bifunctional protein HldE.